Here is a 1011-residue protein sequence, read N- to C-terminus: Protein argonaute 1C (1011 aa).

Residues 1 to 11 (MASRRPTHRHH) are compositionally biased toward basic residues. 2 disordered regions span residues 1–95 (MASR…SPLA) and 107–147 (RPSE…PLRP). Low complexity-rich tracts occupy residues 28-53 (ARYA…ARGA) and 61-92 (QQQQ…ASSS). The segment covering 127 to 140 (ATTTPHHIPSSSKS) has biased composition (polar residues). Residues 352-462 (PVIDFVAQLL…LPMEVCKIVE (111 aa)) enclose the PAZ domain. The 322-residue stretch at 638–959 (LLIGILPDNN…AAFRARFYME (322 aa)) folds into the Piwi domain. Positions 963-982 (SDSSSVVSGPGVRGPLSGSS) are enriched in low complexity. The segment at 963–994 (SDSSSVVSGPGVRGPLSGSSTSRTRAPGGAAV) is disordered.

It belongs to the argonaute family. Ago subfamily.

In terms of biological role, probably involved in the RNA silencing pathway. May bind to short RNAs such as microRNAs (miRNAs) or short interfering RNAs (siRNAs), and represses the translation of mRNAs which are complementary to them. This Oryza sativa subsp. japonica (Rice) protein is Protein argonaute 1C (AGO1C).